A 636-amino-acid polypeptide reads, in one-letter code: Protein BCAP (636 aa).

5 coiled-coil regions span residues 36–97 (LSCL…EQKE), 141–220 (ESEN…WNLQ), 249–325 (YKQR…HGKN), 377–484 (ISSE…ECQE), and 519–631 (LEEE…KMNS).

Belongs to the ODF2 family. In terms of tissue distribution, mainly expressed in trachea and testis. Not detected in bone marrow, bladder, leukocytes. Only weakly detected in tongue, stomach, brain and ovaries.

The protein resides in the cytoplasm. It localises to the cytoskeleton. Its subcellular location is the microtubule organizing center. It is found in the centrosome. The protein localises to the centriole. The protein resides in the centriolar satellite. It localises to the cilium basal body. Acts as a suppressor of ciliogenesis, specifically, the initiation of ciliogenesis. The polypeptide is Protein BCAP (Homo sapiens (Human)).